The sequence spans 479 residues: Probable glycine dehydrogenase (decarboxylating) subunit 2 (479 aa).

An N6-(pyridoxal phosphate)lysine modification is found at Lys-265.

This sequence belongs to the GcvP family. C-terminal subunit subfamily. In terms of assembly, the glycine cleavage system is composed of four proteins: P, T, L and H. In this organism, the P 'protein' is a heterodimer of two subunits. Pyridoxal 5'-phosphate is required as a cofactor.

The catalysed reaction is N(6)-[(R)-lipoyl]-L-lysyl-[glycine-cleavage complex H protein] + glycine + H(+) = N(6)-[(R)-S(8)-aminomethyldihydrolipoyl]-L-lysyl-[glycine-cleavage complex H protein] + CO2. The glycine cleavage system catalyzes the degradation of glycine. The P protein binds the alpha-amino group of glycine through its pyridoxal phosphate cofactor; CO(2) is released and the remaining methylamine moiety is then transferred to the lipoamide cofactor of the H protein. In Pseudothermotoga lettingae (strain ATCC BAA-301 / DSM 14385 / NBRC 107922 / TMO) (Thermotoga lettingae), this protein is Probable glycine dehydrogenase (decarboxylating) subunit 2.